We begin with the raw amino-acid sequence, 142 residues long: Maximins y/Hw (142 aa).

A signal peptide spans 1–18; sequence MIFKYIVAVSFLIASGYA. Residues 19–43 constitute a propeptide that is removed on maturation; it reads RSVKNDEQSLSQREVLEEESLREIR. Phe68 is modified (phenylalanine amide). Positions 72–121 are excised as a propeptide; sequence TAEDHEVMKRLEAVIRDLDSLDHSEEASERETRGFNQEEIANLFTKKEKR. Ile141 carries the isoleucine amide modification.

It belongs to the bombinin family. Expressed by the skin glands.

The protein resides in the secreted. Maximin-y shows antimicrobial activity against bacteria and against the fungus C.albicans. It has little hemolytic activity. Its function is as follows. Maximin-Hw shows antimicrobial activity against bacteria and against the fungus C.albicans. Shows strong hemolytic activity. The chain is Maximins y/Hw from Bombina maxima (Giant fire-bellied toad).